We begin with the raw amino-acid sequence, 346 residues long: Cell shape-determining protein MreC (346 aa).

Residues 89-118 (NRRLKAELAEMRQWRDRALALQDQNDRFKS) are a coiled coil. The interval 292–346 (SLPPVTTEDPQTSILSNPVSRPVAPTPSPATATPSAAPAARPATTATPPQTGAPR) is disordered. Residues 299–308 (EDPQTSILSN) are compositionally biased toward polar residues. Residues 309–340 (PVSRPVAPTPSPATATPSAAPAARPATTATPP) show a composition bias toward low complexity.

The protein belongs to the MreC family. As to quaternary structure, interacts with penicillin-binding proteins (PBP2, PBP1a, PBP1b, PBP2a and PBP2b). Interacts with outer membrane proteins belonging to the TonB-dependent receptor family of transport proteins.

It localises to the periplasm. Its function is as follows. Involved in formation and maintenance of cell shape. Required for the spatial organization of components of the peptidoglycan-synthesizing holoenzyme in the periplasm and peptidoglycan synthetic activity. In Caulobacter vibrioides (strain NA1000 / CB15N) (Caulobacter crescentus), this protein is Cell shape-determining protein MreC.